The primary structure comprises 330 residues: Malate dehydrogenase (330 aa).

12–18 provides a ligand contact to NAD(+); it reads GAAGQIG. Positions 93 and 99 each coordinate substrate. NAD(+) contacts are provided by residues Asn106, Gln113, and 130–132; that span reads VGN. Asn132 and Arg166 together coordinate substrate. The Proton acceptor role is filled by His191.

The protein belongs to the LDH/MDH superfamily. MDH type 2 family.

The enzyme catalyses (S)-malate + NAD(+) = oxaloacetate + NADH + H(+). Its function is as follows. Catalyzes the reversible oxidation of malate to oxaloacetate. This is Malate dehydrogenase from Azoarcus sp. (strain BH72).